The sequence spans 505 residues: Lysine--tRNA ligase (505 aa).

Residues Glu415 and Glu422 each coordinate Mg(2+).

Belongs to the class-II aminoacyl-tRNA synthetase family. Homodimer. Requires Mg(2+) as cofactor.

Its subcellular location is the cytoplasm. The catalysed reaction is tRNA(Lys) + L-lysine + ATP = L-lysyl-tRNA(Lys) + AMP + diphosphate. The chain is Lysine--tRNA ligase from Vibrio parahaemolyticus serotype O3:K6 (strain RIMD 2210633).